The following is a 327-amino-acid chain: MTVLPASIRIEPHGRLAPALLPRVFALVDDATDTDGVQPLSEHVVLHLRYGGDERGCNLLLWVDDDEPRLAGYAHLDATDPVEAPSAELVIAPDFRGRGLGTMLVEAILARTGGRLRLWAHGELPAAQAMARRLGFARRRVLLQMRRDLFAPLPPVTLPDDVQIRTFRPGADDDAWIALNARAFADHPEQGSWTLEDLHRRMQESWFDPDGFFLAERDGELVGFHWTKVHGSPAGQASNGSSGHGHEPLGEVYILGVDPKAQGLGLGRALTIVGLRYLRSRRLPHVMLYVDATNAPAIRLYESLGFRHWGTDVLFERGGTANGEGTS.

N-acetyltransferase domains are found at residues 11–159 (EPHG…VTLP) and 162–327 (VQIR…EGTS). E42 contacts 1D-myo-inositol 2-(L-cysteinylamino)-2-deoxy-alpha-D-glucopyranoside. Residue 89–91 (LVI) participates in acetyl-CoA binding. 3 residues coordinate 1D-myo-inositol 2-(L-cysteinylamino)-2-deoxy-alpha-D-glucopyranoside: E189, K228, and E251. Residues 255–257 (LGV) and 262–268 (QGLGLGR) contribute to the acetyl-CoA site. A 1D-myo-inositol 2-(L-cysteinylamino)-2-deoxy-alpha-D-glucopyranoside-binding site is contributed by Y289. Residue 294 to 299 (NAPAIR) coordinates acetyl-CoA.

Belongs to the acetyltransferase family. MshD subfamily. Monomer.

It catalyses the reaction 1D-myo-inositol 2-(L-cysteinylamino)-2-deoxy-alpha-D-glucopyranoside + acetyl-CoA = mycothiol + CoA + H(+). Catalyzes the transfer of acetyl from acetyl-CoA to desacetylmycothiol (Cys-GlcN-Ins) to form mycothiol. The sequence is that of Mycothiol acetyltransferase from Acidothermus cellulolyticus (strain ATCC 43068 / DSM 8971 / 11B).